The chain runs to 466 residues: Soluble pyridine nucleotide transhydrogenase (466 aa).

Position 36 to 45 (36 to 45) interacts with FAD; that stretch reads ERYQNVGGGC.

It belongs to the class-I pyridine nucleotide-disulfide oxidoreductase family. The cofactor is FAD.

Its subcellular location is the cytoplasm. The catalysed reaction is NAD(+) + NADPH = NADH + NADP(+). Conversion of NADPH, generated by peripheral catabolic pathways, to NADH, which can enter the respiratory chain for energy generation. The sequence is that of Soluble pyridine nucleotide transhydrogenase from Escherichia fergusonii (strain ATCC 35469 / DSM 13698 / CCUG 18766 / IAM 14443 / JCM 21226 / LMG 7866 / NBRC 102419 / NCTC 12128 / CDC 0568-73).